The sequence spans 620 residues: uncharacterized protein (620 aa).

The next 4 helical transmembrane spans lie at 66-86 (LLNF…NQII), 238-258 (FFDA…NLLW), 546-566 (LGII…VWTI), and 584-604 (IIFI…ILVF).

Its subcellular location is the cell membrane. This is an uncharacterized protein from Mycoplasma genitalium (strain ATCC 33530 / DSM 19775 / NCTC 10195 / G37) (Mycoplasmoides genitalium).